The chain runs to 420 residues: Ammonium transporter Amt2 (420 aa).

Transmembrane regions (helical) follow at residues 34 to 54 (VFFL…FAML), 71 to 91 (NMVD…ILCS), 120 to 140 (SWFF…GGVA), 149 to 169 (VLIS…LGPW), 180 to 200 (AGSL…IAAL), 220 to 240 (IPMA…FNVG), 250 to 270 (GLVC…ALIA), 273 to 293 (NDVL…CSGT), 295 to 315 (VVSP…VPIV), 339 to 359 (VIGA…AGGV), and 365 to 385 (IIGA…LAKI).

The protein belongs to the ammonia transporter channel (TC 1.A.11.2) family. In terms of assembly, homotrimer. Interacts and forms a complex with GlnK2.

It is found in the cell membrane. Involved in the uptake of ammonium/ammonia (NH(4)(+)/NH(3)). Transport is electrogenic. The chain is Ammonium transporter Amt2 from Methanocaldococcus jannaschii (strain ATCC 43067 / DSM 2661 / JAL-1 / JCM 10045 / NBRC 100440) (Methanococcus jannaschii).